A 70-amino-acid polypeptide reads, in one-letter code: Protein FlmC homolog (70 aa).

Positions 1–21 are disordered; it reads MSSPHQDSLLPRFAQGEEGHE.

The sequence is that of Protein FlmC homolog from Escherichia coli.